Here is a 250-residue protein sequence, read N- to C-terminus: Probable phosphatase VPA1527 (250 aa).

Zn(2+)-binding residues include histidine 8, histidine 10, histidine 16, histidine 41, glutamate 74, histidine 102, histidine 132, aspartate 194, and histidine 196.

This sequence belongs to the PHP family. It depends on Zn(2+) as a cofactor.

In Vibrio parahaemolyticus serotype O3:K6 (strain RIMD 2210633), this protein is Probable phosphatase VPA1527.